A 486-amino-acid polypeptide reads, in one-letter code: N-succinylglutamate 5-semialdehyde dehydrogenase (486 aa).

NAD(+) is bound at residue 220–225; it reads GSSRTG. Catalysis depends on residues E243 and C277.

It belongs to the aldehyde dehydrogenase family. AstD subfamily.

The catalysed reaction is N-succinyl-L-glutamate 5-semialdehyde + NAD(+) + H2O = N-succinyl-L-glutamate + NADH + 2 H(+). Its pathway is amino-acid degradation; L-arginine degradation via AST pathway; L-glutamate and succinate from L-arginine: step 4/5. Catalyzes the NAD-dependent reduction of succinylglutamate semialdehyde into succinylglutamate. The chain is N-succinylglutamate 5-semialdehyde dehydrogenase from Shewanella sediminis (strain HAW-EB3).